We begin with the raw amino-acid sequence, 627 residues long: 1-deoxy-D-xylulose-5-phosphate synthase (627 aa).

Residues His74 and 115–117 (GHA) each bind thiamine diphosphate. Asp146 provides a ligand contact to Mg(2+). Residues 147–148 (AA), Asn175, Phe284, and Glu364 each bind thiamine diphosphate. Residue Asn175 participates in Mg(2+) binding.

Belongs to the transketolase family. DXPS subfamily. As to quaternary structure, homodimer. It depends on Mg(2+) as a cofactor. The cofactor is thiamine diphosphate.

The catalysed reaction is D-glyceraldehyde 3-phosphate + pyruvate + H(+) = 1-deoxy-D-xylulose 5-phosphate + CO2. Its pathway is metabolic intermediate biosynthesis; 1-deoxy-D-xylulose 5-phosphate biosynthesis; 1-deoxy-D-xylulose 5-phosphate from D-glyceraldehyde 3-phosphate and pyruvate: step 1/1. Catalyzes the acyloin condensation reaction between C atoms 2 and 3 of pyruvate and glyceraldehyde 3-phosphate to yield 1-deoxy-D-xylulose-5-phosphate (DXP). The polypeptide is 1-deoxy-D-xylulose-5-phosphate synthase (Acidobacterium capsulatum (strain ATCC 51196 / DSM 11244 / BCRC 80197 / JCM 7670 / NBRC 15755 / NCIMB 13165 / 161)).